Here is a 575-residue protein sequence, read N- to C-terminus: MTSSDTFLALAPYGRQEVADALSSLPDGKDARSLRHAPYANRLIKLQSAMVPPKVDGTSERVAEIVKGLAEQGAIYPDQMGAIHSDLLNRAYTWNSMGVQESIQALVNDVIHGQNRTLQDELARTKEIANASLLTQFFDSLYKTVDRGQRNFEGFKKLLRLFVNNVPNAEVYGSSGSFSVQINLGGSSQNINLTNAFENLKPIWGARWDAVNNPRIGALLTPNTRALLFFVSSFYDYGAMEPGSYLDNIMRLYKEAIRADVDAEGDAIMELGEAGANLNLRFNDYKDTLNYLLQNREVVPDTAPLELSAEQEMLLKYLMRQLRQALKDGVPADISISTMTQYLDPRLYQTNKVFVEKLQNYLLAAQARNPVYYRLLVLDPNWRPPAGLYTGNYVIPDRYDFEDVQSELEYAGPSRDEYFDDSLFAPGPQRRLNSAEEAQLERDIESLTGHIDEELGVQSQAGWLADHRLPVAFDGALSLTERNAYNTPLPPDSHMRSRSSSVASDLGLLNLSGTGGPGFFASLRPSIGSRQPTGTAVGLRPTTPYSGSGCMRGTGLARKVLNPAASRRGRKLRFY.

Residues 1–95 (MTSSDTFLAL…DLLNRAYTWN (95 aa)) form a peripentonal hexon-tethering domain region. The tract at residues 129 to 243 (ANASLLTQFF…FYDYGAMEPG (115 aa)) is binding to hexon-linking protein. Ser497 is modified (phosphoserine; by host). A propeptide spanning residues 515–575 (GGPGFFASLR…SRRGRKLRFY (61 aa)) is cleaved from the precursor. The disordered stretch occupies residues 525-549 (PSIGSRQPTGTAVGLRPTTPYSGSG).

It belongs to the adenoviridae hexon-linking protein IIIa family. Interacts with hexon proteins; this interaction tethers the peripentonal hexons to hexons situated in the facet. Interacts with the penton protein (via N-terminus). Interacts with packaging protein 3; this interaction is required to promote correct genome packaging. Cleaved near the C-terminus by the viral protease during virion maturation to form the mature protein.

Its subcellular location is the virion. It localises to the host nucleus. Structural component of the virion that acts as a cement protein on the capsid exterior which mediates the interactions between the hexons, including the peripentonal hexons, and reaches all the way to the penton vertices. Two hexon linking proteins IIIa, one from each facet, stabilize the unique edge interface between a pair of facets. As the virus enters the host cell, hexon linking proteins IIIa are shed concomitant with virion acidification in the endosome. During virus assembly, seems to play a role in the serotype specificity of the packaging of viral DNA via its interaction with packaging protein 3. This chain is Pre-hexon-linking protein IIIa, found in Galliformes (FAdV-1).